Reading from the N-terminus, the 284-residue chain is Ribosomal RNA small subunit methyltransferase A (284 aa).

Residues Asn-12, Leu-14, Gly-38, Glu-59, Asp-81, and Asn-106 each coordinate S-adenosyl-L-methionine.

Belongs to the class I-like SAM-binding methyltransferase superfamily. rRNA adenine N(6)-methyltransferase family. RsmA subfamily.

Its subcellular location is the cytoplasm. It carries out the reaction adenosine(1518)/adenosine(1519) in 16S rRNA + 4 S-adenosyl-L-methionine = N(6)-dimethyladenosine(1518)/N(6)-dimethyladenosine(1519) in 16S rRNA + 4 S-adenosyl-L-homocysteine + 4 H(+). In terms of biological role, specifically dimethylates two adjacent adenosines (A1518 and A1519) in the loop of a conserved hairpin near the 3'-end of 16S rRNA in the 30S particle. May play a critical role in biogenesis of 30S subunits. The polypeptide is Ribosomal RNA small subunit methyltransferase A (Phytoplasma australiense).